A 357-amino-acid polypeptide reads, in one-letter code: Elongation factor Ts (357 aa).

Residues 82 to 85 (TDFV) are involved in Mg(2+) ion dislocation from EF-Tu.

Belongs to the EF-Ts family.

The protein localises to the cytoplasm. Functionally, associates with the EF-Tu.GDP complex and induces the exchange of GDP to GTP. It remains bound to the aminoacyl-tRNA.EF-Tu.GTP complex up to the GTP hydrolysis stage on the ribosome. The sequence is that of Elongation factor Ts from Campylobacter jejuni subsp. jejuni serotype O:6 (strain 81116 / NCTC 11828).